A 2298-amino-acid chain; its full sequence is Protein Ycf2 (2298 aa).

ATP is bound at residue 1637–1644; it reads GSIGTGRS.

This sequence belongs to the Ycf2 family.

Its subcellular location is the plastid. The protein localises to the chloroplast stroma. In terms of biological role, probable ATPase of unknown function. Its presence in a non-photosynthetic plant (Epifagus virginiana) and experiments in tobacco indicate that it has an essential function which is probably not related to photosynthesis. This chain is Protein Ycf2, found in Lotus japonicus (Lotus corniculatus var. japonicus).